The sequence spans 236 residues: Snake venom serine protease pallase (236 aa).

The Peptidase S1 domain occupies 1 to 227 (VIGGDECNIN…HLDWIENIIA (227 aa)). 6 cysteine pairs are disulfide-bonded: Cys-7–Cys-139, Cys-26–Cys-42, Cys-74–Cys-234, Cys-118–Cys-188, Cys-150–Cys-167, and Cys-178–Cys-203. Catalysis depends on charge relay system residues His-41 and Asp-86. Ser-182 serves as the catalytic Charge relay system.

This sequence belongs to the peptidase S1 family. Snake venom subfamily. In terms of assembly, monomer. As to expression, expressed by the venom gland.

The protein resides in the secreted. Snake venom serine protease that may act in the hemostasis system of the prey. The chain is Snake venom serine protease pallase from Gloydius halys (Chinese water mocassin).